We begin with the raw amino-acid sequence, 465 residues long: Iron-sulfur cluster assembly SufBD family protein SSP1857 (465 aa).

The protein belongs to the iron-sulfur cluster assembly SufBD family.

This chain is Iron-sulfur cluster assembly SufBD family protein SSP1857, found in Staphylococcus saprophyticus subsp. saprophyticus (strain ATCC 15305 / DSM 20229 / NCIMB 8711 / NCTC 7292 / S-41).